A 227-amino-acid polypeptide reads, in one-letter code: Ornithine decarboxylase antizyme 1 (227 aa).

This sequence belongs to the ODC antizyme family. Interacts with ODC1 and thereby sterically blocks ODC homodimerization. Forms a ternary complex with PSMB4 and OAZ1 before PSMB4 is incorporated into the 20S proteasome. Interacts with AZIN2; this interaction disrupts the interaction between the antizyme and ODC1. Interacts with FAM171A1.

Its function is as follows. Ornithine decarboxylase (ODC) antizyme protein that negatively regulates ODC activity and intracellular polyamine biosynthesis and uptake in response to increased intracellular polyamine levels. Binds to ODC monomers, inhibiting the assembly of the functional ODC homodimer, and targets the monomers for ubiquitin-independent proteolytic destruction by the 26S proteasome. Triggers ODC degradation by inducing the exposure of a cryptic proteasome-interacting surface of ODC. Stabilizes AZIN2 by interfering with its ubiquitination. Also inhibits cellular uptake of polyamines by inactivating the polyamine uptake transporter. SMAD1/OAZ1/PSMB4 complex mediates the degradation of the CREBBP/EP300 repressor SNIP1. Involved in the translocation of AZIN2 from ER-Golgi intermediate compartment (ERGIC) to the cytosol. This Rattus norvegicus (Rat) protein is Ornithine decarboxylase antizyme 1 (Oaz1).